A 375-amino-acid polypeptide reads, in one-letter code: MNFSINRIVLLDNLSKAAKVIDYKNVNPSLSGIYLNVLNDQVNVITTSGILSFKSILNNQNSDLEVKQEGKVLLKPKYVLEMLRRLDDEFVVFSMVEDNELIIKTNNSDFSIGVLNSEDYPLIGFREKGIEFNLNPKEVKKTIYQVFVSMNENNKKLILTGLNLKLNNNQAIFSTTDSFRISQKILEIQSDNNEDIDITIPFKTALELPKLLDNAENLKIIIVEGYITFIIDNVIFQSNLIDGKFPNVQIAFPTKFETIITVKQKSILKVLSRFDLVADDGLPAIVNIKVNEDKIEFKSFISEVGKYEEDFDDFVIEGNKSLSISFNTRFLIDAIKTLSEDRIELKLINSTKPIVINNVYDEHLKQVILPTFLSN.

The protein belongs to the beta sliding clamp family. Forms a ring-shaped head-to-tail homodimer around DNA which binds and tethers DNA polymerases and other proteins to the DNA. The DNA replisome complex has a single clamp-loading complex (3 tau and 1 each of delta, delta', psi and chi subunits) which binds 3 Pol III cores (1 core on the leading strand and 2 on the lagging strand) each with a beta sliding clamp dimer. Additional proteins in the replisome are other copies of gamma, psi and chi, Ssb, DNA helicase and RNA primase.

It is found in the cytoplasm. In terms of biological role, confers DNA tethering and processivity to DNA polymerases and other proteins. Acts as a clamp, forming a ring around DNA (a reaction catalyzed by the clamp-loading complex) which diffuses in an ATP-independent manner freely and bidirectionally along dsDNA. Initially characterized for its ability to contact the catalytic subunit of DNA polymerase III (Pol III), a complex, multichain enzyme responsible for most of the replicative synthesis in bacteria; Pol III exhibits 3'-5' exonuclease proofreading activity. The beta chain is required for initiation of replication as well as for processivity of DNA replication. In Mycoplasma capricolum subsp. capricolum (strain California kid / ATCC 27343 / NCTC 10154), this protein is Beta sliding clamp (dnaN).